We begin with the raw amino-acid sequence, 160 residues long: Ribosomal RNA large subunit methyltransferase H (160 aa).

Residues Leu-76, Gly-108, and 127–132 (FGALTW) contribute to the S-adenosyl-L-methionine site.

This sequence belongs to the RNA methyltransferase RlmH family. In terms of assembly, homodimer.

It is found in the cytoplasm. It catalyses the reaction pseudouridine(1915) in 23S rRNA + S-adenosyl-L-methionine = N(3)-methylpseudouridine(1915) in 23S rRNA + S-adenosyl-L-homocysteine + H(+). In terms of biological role, specifically methylates the pseudouridine at position 1915 (m3Psi1915) in 23S rRNA. This Mesorhizobium japonicum (strain LMG 29417 / CECT 9101 / MAFF 303099) (Mesorhizobium loti (strain MAFF 303099)) protein is Ribosomal RNA large subunit methyltransferase H.